Here is a 76-residue protein sequence, read N- to C-terminus: Defensin-like protein 71 (76 aa).

The signal sequence occupies residues 1 to 22 (MAMTQVFVIFILLATSLCNSNA). Cystine bridges form between cysteine 36–cysteine 74, cysteine 40–cysteine 63, cysteine 49–cysteine 72, and cysteine 53–cysteine 73.

The protein belongs to the DEFL family.

It is found in the secreted. This Arabidopsis thaliana (Mouse-ear cress) protein is Defensin-like protein 71 (LCR84).